We begin with the raw amino-acid sequence, 578 residues long: Putative multidrug export ATP-binding/permease protein SA1683 (578 aa).

The Cytoplasmic segment spans residues 1-15; it reads MIKRYLQFVKPYKYR. A helical transmembrane segment spans residues 16–36; the sequence is IFATIIVGIIKFGIPMLIPLL. Residues 16-306 form the ABC transmembrane type-1 domain; it reads IFATIIVGII…LVASFTTLTQ (291 aa). At 37–59 the chain is on the extracellular side; the sequence is IKYAIDGVINNHALTTDEKVHHL. The helical transmembrane segment at 60–80 threads the bilayer; sequence TIAIGIALFIFVIVRPPIEFI. The Cytoplasmic segment spans residues 81-138; the sequence is RQYLAQWTSNKILYDIRKKLYNHLQALSARFYANNQVGQVISRVINDVEQTKDFILTG. The chain crosses the membrane as a helical span at residues 139–159; sequence LMNIWLDCITIIIALSIMFFL. Over 160–162 the chain is Extracellular; that stretch reads DVK. A helical transmembrane segment spans residues 163–183; the sequence is LTLAALFIFPFYILTVYVFFG. Topologically, residues 184–244 are cytoplasmic; the sequence is RLRKLTRERS…TRALKHTRWN (61 aa). A helical transmembrane segment spans residues 245–263; sequence AYSFAAINTVTDIGPIIVI. At 264-269 the chain is on the extracellular side; the sequence is GVGAYL. The helical transmembrane segment at 270–287 threads the bilayer; it reads AISGSITVGTLAAFVGYL. Residues 288–578 lie on the Cytoplasmic side of the membrane; the sequence is ELLFGPLRRL…YEHLYSIQNL (291 aa). The 236-residue stretch at 340–575 folds into the ABC transporter domain; sequence IDIDHVSFQY…QGAYEHLYSI (236 aa). 374–381 is a binding site for ATP; that stretch reads GMSGGGKS.

The protein belongs to the ABC transporter superfamily. As to quaternary structure, homodimer.

The protein localises to the cell membrane. May be involved in multidrug export. Transmembrane domains (TMD) form a pore in the cell membrane and the ATP-binding domain (NBD) is responsible for energy generation. In Staphylococcus aureus (strain N315), this protein is Putative multidrug export ATP-binding/permease protein SA1683.